We begin with the raw amino-acid sequence, 397 residues long: Phosphoglycerate kinase (397 aa).

Substrate-binding positions include 22-24, Arg37, 60-63, Arg119, and Arg152; these read DLN and HFGR. ATP is bound by residues Lys202, Glu324, and 354 to 357; that span reads GGDT.

It belongs to the phosphoglycerate kinase family. As to quaternary structure, monomer.

It localises to the cytoplasm. The enzyme catalyses (2R)-3-phosphoglycerate + ATP = (2R)-3-phospho-glyceroyl phosphate + ADP. It participates in carbohydrate degradation; glycolysis; pyruvate from D-glyceraldehyde 3-phosphate: step 2/5. The polypeptide is Phosphoglycerate kinase (pgk) (Zymomonas mobilis subsp. mobilis (strain ATCC 31821 / ZM4 / CP4)).